The following is a 513-amino-acid chain: ATP synthase subunit alpha (513 aa).

169 to 176 serves as a coordination point for ATP; it reads GDRQIGKT.

It belongs to the ATPase alpha/beta chains family. As to quaternary structure, F-type ATPases have 2 components, CF(1) - the catalytic core - and CF(0) - the membrane proton channel. CF(1) has five subunits: alpha(3), beta(3), gamma(1), delta(1), epsilon(1). CF(0) has three main subunits: a(1), b(2) and c(9-12). The alpha and beta chains form an alternating ring which encloses part of the gamma chain. CF(1) is attached to CF(0) by a central stalk formed by the gamma and epsilon chains, while a peripheral stalk is formed by the delta and b chains.

It is found in the cell inner membrane. The enzyme catalyses ATP + H2O + 4 H(+)(in) = ADP + phosphate + 5 H(+)(out). Its function is as follows. Produces ATP from ADP in the presence of a proton gradient across the membrane. The alpha chain is a regulatory subunit. The sequence is that of ATP synthase subunit alpha from Vibrio alginolyticus.